Consider the following 500-residue polypeptide: Alpha-L-arabinofuranosidase (500 aa).

The N-terminal stretch at methionine 1–alanine 21 is a signal peptide. N-linked (GlcNAc...) asparagine glycosylation occurs at asparagine 467.

The protein belongs to the glycosyl hydrolase 54 family.

The enzyme catalyses Hydrolysis of terminal non-reducing alpha-L-arabinofuranoside residues in alpha-L-arabinosides.. It functions in the pathway glycan metabolism; L-arabinan degradation. The sequence is that of Alpha-L-arabinofuranosidase (abf1) from Hypocrea jecorina (Trichoderma reesei).